The following is a 342-amino-acid chain: 11-beta-hydroxysteroid dehydrogenase-like 6 (342 aa).

A helical; Signal-anchor for type II membrane protein membrane pass occupies residues 10 to 30; the sequence is FLFPLLTLYALLVFYPTYQRL. Residues 54 to 80 and aspartate 105 contribute to the NADP(+) site; that span reads GAAS…VDIR. Substrate is bound at residue serine 184. Tyrosine 197 serves as the catalytic Proton acceptor. Residues 197–201 and lysine 201 contribute to the NADP(+) site; that span reads YCASK.

This sequence belongs to the short-chain dehydrogenases/reductases (SDR) family.

The protein resides in the membrane. This Arabidopsis thaliana (Mouse-ear cress) protein is 11-beta-hydroxysteroid dehydrogenase-like 6 (HSD6).